A 203-amino-acid chain; its full sequence is Potassium channel Cha6605_3372 (203 aa).

Residues 1–7 (MVEAPEQ) lie on the Cytoplasmic side of the membrane. A helical transmembrane segment spans residues 8 to 31 (SETGRIEAFSDGVFAIAITLLVLE). Positions 12–18 (RIEAFSD) match the RxxxFSD motif motif. The Extracellular segment spans residues 32-52 (IKVPQHKIVETVGLVSSLLSL). Positions 37–42 (HKIVET) are short helix H1. A short helix H2 region spans residues 44 to 50 (GLVSSLL). Residues 53–78 (WPSYLAFLTSFASILVMWVNHHRIFS) form a helical membrane-spanning segment. Residues 79–84 (LVARTD) lie on the Cytoplasmic side of the membrane. A helical transmembrane segment spans residues 85-110 (HAFFYWNGLLLMLVTFVPFPTALLAE). Topologically, residues 111-117 (YLIHPQA) are extracellular. The chain crosses the membrane as a helical span at residues 118–142 (RVAASVYAGIFLAIAIVFNRLWKHA). Residues 143-154 (ATADRLLAQKAD) are Cytoplasmic-facing. The helical transmembrane segment at 155-181 (RHEVDAITKQYRFGPGLYLVAFALSFI) threads the bilayer. Topologically, residues 182 to 183 (SV) are extracellular. Residues 184–199 (WLSVGVCFVLAIYFAL) traverse the membrane as a helical segment. The Cytoplasmic portion of the chain corresponds to 200-203 (RSNA).

It belongs to the TMEM175 family. In terms of assembly, homotetramer.

It is found in the membrane. The enzyme catalyses K(+)(in) = K(+)(out). Functionally, potassium channel. The channel is permeable for K(+), Rb(+) and Cs(+), while it is unable to conduct Na(+). The chain is Potassium channel Cha6605_3372 from Chamaesiphon minutus (strain ATCC 27169 / PCC 6605).